The following is a 247-amino-acid chain: MAGHSKWANIKHRKAAQDAQRGKIFTKLIRELVTAAKIGGGDAGSNPRLRAAVDKALASNMTRDTINRAIDRGVGGGDDTNMETRVYEGYGPGGTAVMVECLSDNANRTISQVRPSFTKCGGNLGTEGSVGYLFNKKGLIIIDAGADEDALTEAAIEAGADDIQPQDDGSFEIYTAWEELGDVRDGIEKAGFKIAEAEVSMIPTTTVDLDAETAPKLLRLIDMLEDCDDVQNVYHNGEISDEVAALL.

This sequence belongs to the TACO1 family.

The protein localises to the cytoplasm. The polypeptide is Probable transcriptional regulatory protein Asuc_1803 (Actinobacillus succinogenes (strain ATCC 55618 / DSM 22257 / CCUG 43843 / 130Z)).